The chain runs to 193 residues: MLDKLKESLRNSPVIKKGEYDYFVNPVTDGIPLTEPELLEEVAEEIVRRFRPEADKIICIEAMGIHHATVLSLKTGIPFVVVRKRRYGLPGEVAVHQMTGYSEGELYINGVDSGDRVVVIDDVVSTGGTLLAVLEALREMDVDVRDVITVIDKGEGSRVVRERTGFTVKSLVKVDVIDGRVKVEDIPAGGPHD.

It belongs to the purine/pyrimidine phosphoribosyltransferase family. Archaeal HPRT subfamily. As to quaternary structure, homodimer.

Its subcellular location is the cytoplasm. The enzyme catalyses IMP + diphosphate = hypoxanthine + 5-phospho-alpha-D-ribose 1-diphosphate. It catalyses the reaction GMP + diphosphate = guanine + 5-phospho-alpha-D-ribose 1-diphosphate. Its pathway is purine metabolism; IMP biosynthesis via salvage pathway; IMP from hypoxanthine: step 1/1. Catalyzes a salvage reaction resulting in the formation of IMP that is energically less costly than de novo synthesis. This chain is Hypoxanthine/guanine phosphoribosyltransferase, found in Methanothermobacter thermautotrophicus (strain ATCC 29096 / DSM 1053 / JCM 10044 / NBRC 100330 / Delta H) (Methanobacterium thermoautotrophicum).